We begin with the raw amino-acid sequence, 503 residues long: Glycerol kinase (503 aa).

Thr14 is a binding site for ADP. Residues Thr14, Thr15, and Ser16 each coordinate ATP. A sn-glycerol 3-phosphate-binding site is contributed by Thr14. Position 18 (Arg18) interacts with ADP. The sn-glycerol 3-phosphate site is built by Arg84, Glu85, Tyr136, and Asp246. Residues Arg84, Glu85, Tyr136, Asp246, and Gln247 each contribute to the glycerol site. Residues Thr268 and Gly311 each coordinate ADP. The ATP site is built by Thr268, Gly311, Gln315, and Gly412. Positions 412 and 416 each coordinate ADP.

The protein belongs to the FGGY kinase family.

The catalysed reaction is glycerol + ATP = sn-glycerol 3-phosphate + ADP + H(+). It functions in the pathway polyol metabolism; glycerol degradation via glycerol kinase pathway; sn-glycerol 3-phosphate from glycerol: step 1/1. With respect to regulation, inhibited by fructose 1,6-bisphosphate (FBP). Functionally, key enzyme in the regulation of glycerol uptake and metabolism. Catalyzes the phosphorylation of glycerol to yield sn-glycerol 3-phosphate. This chain is Glycerol kinase, found in Haemophilus influenzae (strain 86-028NP).